A 159-amino-acid chain; its full sequence is ATP synthase subunit delta, mitochondrial (159 aa).

The transit peptide at methionine 1–tyrosine 23 directs the protein to the mitochondrion.

Belongs to the ATPase epsilon chain family. In terms of assembly, F-type ATPases have 2 components, CF(1) - the catalytic core - and CF(0) - the membrane proton channel. CF(1) has five subunits: alpha(3), beta(3), gamma(1), delta(1), epsilon(1). CF(0) has three main subunits: a, b and c.

It localises to the mitochondrion. It is found in the mitochondrion inner membrane. Functionally, mitochondrial membrane ATP synthase (F(1)F(0) ATP synthase or Complex V) produces ATP from ADP in the presence of a proton gradient across the membrane which is generated by electron transport complexes of the respiratory chain. F-type ATPases consist of two structural domains, F(1) - containing the extramembraneous catalytic core, and F(0) - containing the membrane proton channel, linked together by a central stalk and a peripheral stalk. During catalysis, ATP turnover in the catalytic domain of F(1) is coupled via a rotary mechanism of the central stalk subunits to proton translocation. Part of the complex F(1) domain and of the central stalk which is part of the complex rotary element. Rotation of the central stalk against the surrounding alpha(3)beta(3) subunits leads to hydrolysis of ATP in three separate catalytic sites on the beta subunits. This is ATP synthase subunit delta, mitochondrial (ATP16) from Kluyveromyces lactis (strain ATCC 8585 / CBS 2359 / DSM 70799 / NBRC 1267 / NRRL Y-1140 / WM37) (Yeast).